The sequence spans 680 residues: Fermitin family homolog 2 (680 aa).

The tract at residues 40–81 (HIGGVMLKLVEKLDVKKDWSDHALWWEKKRTWLLKTHWTLDK) is interaction with membranes containing phosphatidylinositol phosphate. Positions 141–162 (LKKPRDPTKKKKKKLDDQSEDE) are disordered. Residues S159, S181, S339, and S351 each carry the phosphoserine modification. The FERM domain occupies 189–661 (MTPTYDAHDG…GYIFLSTRAK (473 aa)). A PH domain is found at 380–476 (KVFKPKKLTL…WMAACRLASK (97 aa)). Residue K383 coordinates a 1,2-diacyl-sn-glycero-3-phospho-(1D-myo-inositol-3,4,5-trisphosphate). At S666 the chain carries Phosphoserine.

Belongs to the kindlin family. Interacts with ITGB1; the interaction is inhibited in presence of ITGB1BP1. Interacts with FBLIM1. Interacts with active, unphosphorylated CTNNB1. Identified in a complex with CTNNB1 and TCF7L2/TCF4. Interacts with ILK, ITGB1 and ITGB3. As to expression, detected in adult heart muscle (at protein level). Detected in heart, skeletal muscle and testis.

The protein localises to the cytoplasm. It localises to the cell cortex. It is found in the cytoskeleton. The protein resides in the stress fiber. Its subcellular location is the cell junction. The protein localises to the focal adhesion. It localises to the membrane. It is found in the cell projection. The protein resides in the lamellipodium membrane. Its subcellular location is the nucleus. The protein localises to the myofibril. It localises to the sarcomere. It is found in the i band. The protein resides in the cell surface. Scaffolding protein that enhances integrin activation mediated by TLN1 and/or TLN2, but activates integrins only weakly by itself. Binds to membranes enriched in phosphoinositides. Enhances integrin-mediated cell adhesion onto the extracellular matrix and cell spreading; this requires both its ability to interact with integrins and with phospholipid membranes. Required for the assembly of focal adhesions. Participates in the connection between extracellular matrix adhesion sites and the actin cytoskeleton and also in the orchestration of actin assembly and cell shape modulation. Recruits FBLIM1 to focal adhesions. Plays a role in the TGFB1 and integrin signaling pathways. Stabilizes active CTNNB1 and plays a role in the regulation of transcription mediated by CTNNB1 and TCF7L2/TCF4 and in Wnt signaling. The protein is Fermitin family homolog 2 (Fermt2) of Mus musculus (Mouse).